The sequence spans 145 residues: D-aminoacyl-tRNA deacylase (145 aa).

Residues glycine 137–proline 138 carry the Gly-cisPro motif, important for rejection of L-amino acids motif.

This sequence belongs to the DTD family. In terms of assembly, homodimer.

It localises to the cytoplasm. The catalysed reaction is glycyl-tRNA(Ala) + H2O = tRNA(Ala) + glycine + H(+). It catalyses the reaction a D-aminoacyl-tRNA + H2O = a tRNA + a D-alpha-amino acid + H(+). Its function is as follows. An aminoacyl-tRNA editing enzyme that deacylates mischarged D-aminoacyl-tRNAs. Also deacylates mischarged glycyl-tRNA(Ala), protecting cells against glycine mischarging by AlaRS. Acts via tRNA-based rather than protein-based catalysis; rejects L-amino acids rather than detecting D-amino acids in the active site. By recycling D-aminoacyl-tRNA to D-amino acids and free tRNA molecules, this enzyme counteracts the toxicity associated with the formation of D-aminoacyl-tRNA entities in vivo and helps enforce protein L-homochirality. This Sodalis glossinidius (strain morsitans) protein is D-aminoacyl-tRNA deacylase.